The following is a 216-amino-acid chain: MEPAFWQQRWADNQIGFHQAQVNPYLQTYWPQLQLAPGSRVLVPLCGKSLDLAWLAGQGHRVLGVELSRRAVEDFFREHGLEAEVRQQGAFEVWRSGDVQLWCGDFFALRAEDVADCVGLYDRAAVIALPVQMRARYMQLLSGLLPTSCRGLVVTLDYDQSLLAGPPFSVRDEELRQGFAGWQVEQLEAVEVIEESPKFVQAGASSLLERVYRLSR.

Residues tryptophan 10, leucine 45, glutamate 66, and arginine 123 each contribute to the S-adenosyl-L-methionine site.

It belongs to the class I-like SAM-binding methyltransferase superfamily. TPMT family.

Its subcellular location is the cytoplasm. The catalysed reaction is S-adenosyl-L-methionine + a thiopurine = S-adenosyl-L-homocysteine + a thiopurine S-methylether.. In Pseudomonas putida (strain ATCC 700007 / DSM 6899 / JCM 31910 / BCRC 17059 / LMG 24140 / F1), this protein is Thiopurine S-methyltransferase.